A 486-amino-acid chain; its full sequence is N-succinylglutamate 5-semialdehyde dehydrogenase (486 aa).

220-225 serves as a coordination point for NAD(+); the sequence is GSSRTG. Catalysis depends on residues Glu243 and Cys277.

The protein belongs to the aldehyde dehydrogenase family. AstD subfamily.

The catalysed reaction is N-succinyl-L-glutamate 5-semialdehyde + NAD(+) + H2O = N-succinyl-L-glutamate + NADH + 2 H(+). The protein operates within amino-acid degradation; L-arginine degradation via AST pathway; L-glutamate and succinate from L-arginine: step 4/5. Functionally, catalyzes the NAD-dependent reduction of succinylglutamate semialdehyde into succinylglutamate. The sequence is that of N-succinylglutamate 5-semialdehyde dehydrogenase from Shewanella putrefaciens (strain CN-32 / ATCC BAA-453).